We begin with the raw amino-acid sequence, 474 residues long: Cysteine--tRNA ligase (474 aa).

Cys30 contacts Zn(2+). The 'HIGH' region motif lies at 32-42 (PTVYNFAHIGN). Zn(2+) contacts are provided by Cys212, His237, and Glu241. Positions 270 to 274 (KMSKS) match the 'KMSKS' region motif. Lys273 lines the ATP pocket.

The protein belongs to the class-I aminoacyl-tRNA synthetase family. As to quaternary structure, monomer. Zn(2+) serves as cofactor.

The protein localises to the cytoplasm. The enzyme catalyses tRNA(Cys) + L-cysteine + ATP = L-cysteinyl-tRNA(Cys) + AMP + diphosphate. This is Cysteine--tRNA ligase from Leptospira borgpetersenii serovar Hardjo-bovis (strain JB197).